Reading from the N-terminus, the 154-residue chain is 3-hydroxyacyl-[acyl-carrier-protein] dehydratase FabZ (154 aa).

His-57 is a catalytic residue.

This sequence belongs to the thioester dehydratase family. FabZ subfamily.

Its subcellular location is the cytoplasm. The enzyme catalyses a (3R)-hydroxyacyl-[ACP] = a (2E)-enoyl-[ACP] + H2O. Its function is as follows. Involved in unsaturated fatty acids biosynthesis. Catalyzes the dehydration of short chain beta-hydroxyacyl-ACPs and long chain saturated and unsaturated beta-hydroxyacyl-ACPs. The protein is 3-hydroxyacyl-[acyl-carrier-protein] dehydratase FabZ of Allorhizobium ampelinum (strain ATCC BAA-846 / DSM 112012 / S4) (Agrobacterium vitis (strain S4)).